The primary structure comprises 118 residues: Fluoride-specific ion channel FluC 2 (118 aa).

A run of 4 helical transmembrane segments spans residues Met-1 to Ile-21, Phe-33 to Gly-53, Gly-55 to Phe-75, and Thr-93 to Met-113. Na(+) contacts are provided by Gly-70 and Thr-73.

Belongs to the fluoride channel Fluc/FEX (TC 1.A.43) family.

It is found in the cell membrane. The enzyme catalyses fluoride(in) = fluoride(out). With respect to regulation, na(+) is not transported, but it plays an essential structural role and its presence is essential for fluoride channel function. Fluoride-specific ion channel. Important for reducing fluoride concentration in the cell, thus reducing its toxicity. The chain is Fluoride-specific ion channel FluC 2 from Bacillus cereus (strain ZK / E33L).